A 229-amino-acid chain; its full sequence is Enolase-phosphatase E1 (229 aa).

It belongs to the HAD-like hydrolase superfamily. MasA/MtnC family. Monomer. Requires Mg(2+) as cofactor.

The enzyme catalyses 5-methylsulfanyl-2,3-dioxopentyl phosphate + H2O = 1,2-dihydroxy-5-(methylsulfanyl)pent-1-en-3-one + phosphate. The protein operates within amino-acid biosynthesis; L-methionine biosynthesis via salvage pathway; L-methionine from S-methyl-5-thio-alpha-D-ribose 1-phosphate: step 3/6. Its pathway is amino-acid biosynthesis; L-methionine biosynthesis via salvage pathway; L-methionine from S-methyl-5-thio-alpha-D-ribose 1-phosphate: step 4/6. Functionally, bifunctional enzyme that catalyzes the enolization of 2,3-diketo-5-methylthiopentyl-1-phosphate (DK-MTP-1-P) into the intermediate 2-hydroxy-3-keto-5-methylthiopentenyl-1-phosphate (HK-MTPenyl-1-P), which is then dephosphorylated to form the acireductone 1,2-dihydroxy-3-keto-5-methylthiopentene (DHK-MTPene). In Pectobacterium atrosepticum (strain SCRI 1043 / ATCC BAA-672) (Erwinia carotovora subsp. atroseptica), this protein is Enolase-phosphatase E1.